A 316-amino-acid chain; its full sequence is MPTKGDYQPPKNGILSKLPESTVPYGELLRIHRPLGYYLNISPYVVGVAYTAAISPVTLPATFLLGRLVILSLWGFCIRSAGCAWNDLIDMDIDRQVSRTKLRPLPRGAVSPSGAALLTAFMFGCGGSLLLLLPSQCAFEAAIVVFFALLYPFGKRFSDHPQLILTNIAWAIPMAMSSLDMNPLDFPIPTLAMSFSIASVIVMIDIVYACQDAEEDKKVGARSMAVRYMEITDQIAYSLFFSGTLSLLAGGILRGLGIPFLIFSVGGHFVGFLRFLRASLGNGAKSALVESRAKSSCLLATVFLVFGLFFEYCVRL.

A run of 9 helical transmembrane segments spans residues Val-45–Leu-65, Val-69–Ile-89, Gly-108–Ser-128, Leu-129–Leu-149, Leu-163–Pro-183, Ile-188–Tyr-208, Asp-233–Leu-253, Leu-256–Leu-276, and Ser-296–Leu-316.

It belongs to the UbiA prenyltransferase family. Mg(2+) is required as a cofactor.

Its subcellular location is the membrane. It carries out the reaction 3,5-dimethylorsellinate + (2E,6E)-farnesyl diphosphate = (3R)-3-farnesyl-6-hydroxy-2,3,5-trimethyl-4-oxocyclohexa-1,5-diene-1-carboxylate + diphosphate + H(+). The protein operates within secondary metabolite biosynthesis; terpenoid biosynthesis. Functionally, polyprenyl transferase; part of the gene cluster A that mediates the biosynthesis of the fungal meroterpenoid acetoxydehydroaustin. The first step of the pathway is the synthesis of 3,5-dimethylorsellinic acid by the polyketide synthase ausA. 3,5-dimethylorsellinic acid is then prenylated by the polyprenyl transferase ausN. Further epoxidation by the FAD-dependent monooxygenase ausM and cyclization by the probable terpene cyclase ausL lead to the formation of protoaustinoid A. Protoaustinoid A is then oxidized to spiro-lactone preaustinoid A3 by the combined action of the FAD-binding monooxygenases ausB and ausC, and the dioxygenase ausE. Acid-catalyzed keto-rearrangement and ring contraction of the tetraketide portion of preaustinoid A3 by ausJ lead to the formation of preaustinoid A4. The aldo-keto reductase ausK, with the help of ausH, is involved in the next step by transforming preaustinoid A4 into isoaustinone which is in turn hydroxylated by the P450 monooxygenase ausI to form austinolide. The cytochrome P450 monooxygenase ausG then modifies austinolide to austinol. Austinol is further acetylated to austin by the O-acetyltransferase ausP, which spontaneously changes to dehydroaustin. The cytochrome P450 monooxygenase then converts dehydroaustin is into 7-dehydrodehydroaustin. The hydroxylation catalyzed by ausR permits the second O-acetyltransferase ausQ to add an additional acetyl group to the molecule, leading to the formation of acetoxydehydroaustin. Due to genetic rearrangements of the clusters and the subsequent loss of some enzymes, the end product of the Penicillium brasilianum austinoid biosynthesis clusters is acetoxydehydroaustin. In Penicillium brasilianum, this protein is Polyprenyl transferase ausN.